The primary structure comprises 506 residues: Nucleoside import ATP-binding protein NupA (506 aa).

ABC transporter domains are found at residues 7 to 242 and 259 to 503; these read IQMI…VGRS and LEIK…VGGN. Residue 39 to 46 participates in ATP binding; that stretch reads GENGAGKS.

It belongs to the ABC transporter superfamily. The complex is composed of two ATP-binding proteins (NupA), two transmembrane proteins (NupB and NupC) and a solute-binding protein (BmpA).

It localises to the cell membrane. Its function is as follows. Part of an ABC transporter complex involved in the uptake of all common nucleosides. Responsible for energy coupling to the transport system. This is Nucleoside import ATP-binding protein NupA from Lactococcus lactis subsp. cremoris (strain MG1363).